Consider the following 261-residue polypeptide: Imidazole glycerol phosphate synthase subunit HisF (261 aa).

Active-site residues include Asp-16 and Asp-135.

Belongs to the HisA/HisF family. As to quaternary structure, heterodimer of HisH and HisF.

Its subcellular location is the cytoplasm. It catalyses the reaction 5-[(5-phospho-1-deoxy-D-ribulos-1-ylimino)methylamino]-1-(5-phospho-beta-D-ribosyl)imidazole-4-carboxamide + L-glutamine = D-erythro-1-(imidazol-4-yl)glycerol 3-phosphate + 5-amino-1-(5-phospho-beta-D-ribosyl)imidazole-4-carboxamide + L-glutamate + H(+). The protein operates within amino-acid biosynthesis; L-histidine biosynthesis; L-histidine from 5-phospho-alpha-D-ribose 1-diphosphate: step 5/9. Functionally, IGPS catalyzes the conversion of PRFAR and glutamine to IGP, AICAR and glutamate. The HisF subunit catalyzes the cyclization activity that produces IGP and AICAR from PRFAR using the ammonia provided by the HisH subunit. The sequence is that of Imidazole glycerol phosphate synthase subunit HisF from Mycobacterium leprae (strain Br4923).